Here is a 302-residue protein sequence, read N- to C-terminus: Exodeoxyribonuclease (302 aa).

The enzyme catalyses Exonucleolytic cleavage in the 5'- to 3'-direction to yield nucleoside 5'-phosphates.. This enzyme is essential for phage DNA replication; it is believed to function in the removal of DNA-linked RNA primers. It is also necessary for host DNA degradation and phage genetic recombination. The sequence is that of Exodeoxyribonuclease (6) from Enterobacteria phage T3 (Bacteriophage T3).